A 181-amino-acid polypeptide reads, in one-letter code: NADH-quinone oxidoreductase subunit B (181 aa).

The [4Fe-4S] cluster site is built by Cys-45, Cys-46, Cys-111, and Cys-140.

This sequence belongs to the complex I 20 kDa subunit family. NDH-1 is composed of 15 different subunits. Subunits NuoB, C, D, E, F, and G constitute the peripheral sector of the complex. The cofactor is [4Fe-4S] cluster.

It localises to the cell membrane. It carries out the reaction a quinone + NADH + 5 H(+)(in) = a quinol + NAD(+) + 4 H(+)(out). Functionally, NDH-1 shuttles electrons from NADH, via FMN and iron-sulfur (Fe-S) centers, to quinones in the respiratory chain. The immediate electron acceptor for the enzyme in this species is believed to be a menaquinone. Couples the redox reaction to proton translocation (for every two electrons transferred, four hydrogen ions are translocated across the cytoplasmic membrane), and thus conserves the redox energy in a proton gradient. This Deinococcus radiodurans (strain ATCC 13939 / DSM 20539 / JCM 16871 / CCUG 27074 / LMG 4051 / NBRC 15346 / NCIMB 9279 / VKM B-1422 / R1) protein is NADH-quinone oxidoreductase subunit B.